A 395-amino-acid chain; its full sequence is Accessory Sec system protein translocase subunit SecY2 (395 aa).

Helical transmembrane passes span 13–33 (VSFS…PLPF), 63–83 (ISIF…IQLL), 102–122 (LMQF…VFAF), 128–148 (GLED…VVWL), 157–177 (VGAS…PNII), 190–210 (WIWL…WLAF), 239–259 (MAAM…LMVG), 272–292 (VFQA…FTFV), 326–346 (LIWI…VFGL), and 355–375 (YAGF…MGGI).

Belongs to the SecY/SEC61-alpha family. SecY2 subfamily. As to quaternary structure, component of the accessory SecA2/SecY2 protein translocase complex required to export cell wall proteins. May form heterotrimers with SecE and SecG subunits.

The protein localises to the cell membrane. Its function is as follows. Part of the accessory SecA2/SecY2 system specifically required for export of possible cell wall proteins. The central subunit of a protein translocation channel. In Lactobacillus johnsonii (strain CNCM I-12250 / La1 / NCC 533), this protein is Accessory Sec system protein translocase subunit SecY2.